The sequence spans 148 residues: Large ribosomal subunit protein bL19 (148 aa).

Belongs to the bacterial ribosomal protein bL19 family.

Its function is as follows. This protein is located at the 30S-50S ribosomal subunit interface and may play a role in the structure and function of the aminoacyl-tRNA binding site. The polypeptide is Large ribosomal subunit protein bL19 (Paramagnetospirillum magneticum (strain ATCC 700264 / AMB-1) (Magnetospirillum magneticum)).